We begin with the raw amino-acid sequence, 479 residues long: Calcium uniporter protein, mitochondrial (479 aa).

The N-terminal 54 residues, 1–54 (MNHALRRATLGLSPGLRASRLQQSFAKHQIPAVYRCEAASTPLQRAFTTSRCFR), are a transit peptide targeting the mitochondrion. The Mitochondrial matrix segment spans residues 55–323 (QETAAESEKD…DTLAHQGAHR (269 aa)). Disordered stretches follow at residues 56–125 (ETAA…KGRL) and 206–238 (EADQ…HEGP). A coiled-coil region spans residues 59–79 (AESEKDDAARREEQSERARKR). Residues 60-75 (ESEKDDAARREEQSER) are compositionally biased toward basic and acidic residues. Over residues 83-93 (NVTSGSSAQTL) the composition is skewed to polar residues. Composition is skewed to basic and acidic residues over residues 94–122 (ENDR…DMKK) and 206–224 (EADQ…KKDN). Residues 324–344 (LAQGGFAALAGWWGVVYYVTF) traverse the membrane as a helical segment. At 345-354 (HTQAGWDLVE) the chain is on the mitochondrial intermembrane side. A Selectivity filter motif is present at residues 350–358 (WDLVEPVTY). Glutamate 354 lines the Ca(2+) pocket. A helical membrane pass occupies residues 355 to 375 (PVTYLAGLTTVMGAYLWFLYI). At 376 to 479 (SRDLSYKAAM…GSSDKIKKKQ (104 aa)) the chain is on the mitochondrial matrix side. Residues 445–462 (KVLEEEKQGRDGTKVTEG) show a composition bias toward basic and acidic residues. The tract at residues 445-479 (KVLEEEKQGRDGTKVTEGKDEDDGPGSSDKIKKKQ) is disordered.

This sequence belongs to the MCU (TC 1.A.77) family. Homotetramer, assembles in a dimer or dimers configuration with two interfaces.

The protein localises to the mitochondrion inner membrane. It catalyses the reaction Ca(2+)(in) = Ca(2+)(out). Its function is as follows. Highly selective calcium channel localized to the inner mitochondrial membrane, which mediates calcium uptake into the mitochondrial matrix. Mitochondrial calcium homeostasis plays key roles in cellular physiology and regulates ATP production, cytoplasmic calcium signals and activation of cell death pathways. Sufficient to operate as a pore-forming channel without the need of calcium-sensor or auxiliary subunit. This Gibberella zeae (strain ATCC MYA-4620 / CBS 123657 / FGSC 9075 / NRRL 31084 / PH-1) (Wheat head blight fungus) protein is Calcium uniporter protein, mitochondrial.